The sequence spans 232 residues: Orotidine 5'-phosphate decarboxylase (232 aa).

Residues D16, K38, 65–74, T119, R180, Q189, G209, and R210 each bind substrate; that span reads DLKLHDIGNT. The active-site Proton donor is K67.

Belongs to the OMP decarboxylase family. Type 1 subfamily. In terms of assembly, homodimer.

It catalyses the reaction orotidine 5'-phosphate + H(+) = UMP + CO2. It functions in the pathway pyrimidine metabolism; UMP biosynthesis via de novo pathway; UMP from orotate: step 2/2. Functionally, catalyzes the decarboxylation of orotidine 5'-monophosphate (OMP) to uridine 5'-monophosphate (UMP). The sequence is that of Orotidine 5'-phosphate decarboxylase from Methylorubrum populi (strain ATCC BAA-705 / NCIMB 13946 / BJ001) (Methylobacterium populi).